A 774-amino-acid chain; its full sequence is DNA ligase 3 (774 aa).

The tract at residues 1 to 25 (MPPKKRMKNGSSLKSTSKKGEKSRN) is disordered. Lys-433 acts as the N6-AMP-lysine intermediate in catalysis.

The protein belongs to the ATP-dependent DNA ligase family.

The protein resides in the nucleus. It catalyses the reaction ATP + (deoxyribonucleotide)n-3'-hydroxyl + 5'-phospho-(deoxyribonucleotide)m = (deoxyribonucleotide)n+m + AMP + diphosphate.. This is DNA ligase 3 (adl1) from Schizosaccharomyces pombe (strain 972 / ATCC 24843) (Fission yeast).